The sequence spans 451 residues: Adenylyltransferase and sulfurtransferase MOCS3 (451 aa).

Position 60 is a phosphothreonine (threonine 60). ATP contacts are provided by residues glycine 99, aspartate 120, 127–131 (SNFHR), lysine 144, and 188–189 (DN). Residues cysteine 229 and cysteine 232 each contribute to the Zn(2+) site. Cysteine 246 acts as the Glycyl thioester intermediate; for adenylyltransferase activity in catalysis. Zn(2+) is bound by residues cysteine 304 and cysteine 307. The Rhodanese domain occupies 353–449 (QQQPHLLIDV…WTHKVDPSFP (97 aa)). Residue cysteine 408 is the Cysteine persulfide intermediate; for sulfurtransferase activity of the active site.

The protein in the N-terminal section; belongs to the HesA/MoeB/ThiF family. UBA4 subfamily. Zn(2+) is required as a cofactor.

It is found in the cytoplasm. The protein localises to the cytosol. The catalysed reaction is [molybdopterin-synthase sulfur-carrier protein]-C-terminal Gly-Gly + ATP + H(+) = [molybdopterin-synthase sulfur-carrier protein]-C-terminal Gly-Gly-AMP + diphosphate. It catalyses the reaction [molybdopterin-synthase sulfur-carrier protein]-C-terminal Gly-Gly-AMP + S-sulfanyl-L-cysteinyl-[cysteine desulfurase] + AH2 = [molybdopterin-synthase sulfur-carrier protein]-C-terminal-Gly-aminoethanethioate + L-cysteinyl-[cysteine desulfurase] + A + AMP + 2 H(+). Its pathway is tRNA modification; 5-methoxycarbonylmethyl-2-thiouridine-tRNA biosynthesis. It functions in the pathway cofactor biosynthesis; molybdopterin biosynthesis. Plays a central role in 2-thiolation of mcm(5)S(2)U at tRNA wobble positions of cytosolic tRNA(Lys), tRNA(Glu) and tRNA(Gln). Also essential during biosynthesis of the molybdenum cofactor. Acts by mediating the C-terminal thiocarboxylation of sulfur carriers URM1 and MOCS2A. Its N-terminus first activates URM1 and MOCS2A as acyl-adenylates (-COAMP), then the persulfide sulfur on the catalytic cysteine is transferred to URM1 and MOCS2A to form thiocarboxylation (-COSH) of their C-terminus. The reaction probably involves hydrogen sulfide that is generated from the persulfide intermediate and that acts as a nucleophile towards URM1 and MOCS2A. Subsequently, a transient disulfide bond is formed. Does not use thiosulfate as sulfur donor; NFS1 probably acting as a sulfur donor for thiocarboxylation reactions. This is Adenylyltransferase and sulfurtransferase MOCS3 from Drosophila ananassae (Fruit fly).